Reading from the N-terminus, the 267-residue chain is Ras-related protein Rab-36 (267 aa).

Residues valine 68, glycine 69, lysine 70, threonine 71, serine 72, aspartate 83, tyrosine 86, and threonine 89 each contribute to the GTP site. Threonine 71 is a Mg(2+) binding site. A Switch 1 motif is present at residues 76–94 (RLCKNVFDHDYKATIGVDF). Positions 89 and 112 each coordinate Mg(2+). The Switch 2 motif lies at 113–132 (TAGQEKFKCIASAYYRGAQV). Residues glycine 115, lysine 172, aspartate 174, serine 203, alanine 204, and lysine 205 each contribute to the GTP site. 2 S-geranylgeranyl cysteine lipidation sites follow: cysteine 266 and cysteine 267.

It belongs to the small GTPase superfamily. Rab family. Mg(2+) serves as cofactor.

It localises to the golgi apparatus membrane. The catalysed reaction is GTP + H2O = GDP + phosphate + H(+). Its activity is regulated as follows. Regulated by guanine nucleotide exchange factors (GEFs) which promote the exchange of bound GDP for free GTP. Regulated by GTPase activating proteins (GAPs) which increase the GTP hydrolysis activity. Inhibited by GDP dissociation inhibitors (GDIs). Its function is as follows. The small GTPases Rab are key regulators of intracellular membrane trafficking, from the formation of transport vesicles to their fusion with membranes. Rabs cycle between an inactive GDP-bound form and an active GTP-bound form that is able to recruit to membranes different sets of downstream effectors directly responsible for vesicle formation, movement, tethering and fusion. This is Ras-related protein Rab-36 from Mus musculus (Mouse).